The sequence spans 199 residues: GTP cyclohydrolase 1 (199 aa).

Residues cysteine 89, histidine 92, and cysteine 161 each contribute to the Zn(2+) site.

Belongs to the GTP cyclohydrolase I family. As to quaternary structure, toroid-shaped homodecamer, composed of two pentamers of five dimers.

The catalysed reaction is GTP + H2O = 7,8-dihydroneopterin 3'-triphosphate + formate + H(+). Its pathway is cofactor biosynthesis; 7,8-dihydroneopterin triphosphate biosynthesis; 7,8-dihydroneopterin triphosphate from GTP: step 1/1. This Bifidobacterium longum (strain NCC 2705) protein is GTP cyclohydrolase 1.